Reading from the N-terminus, the 396-residue chain is Acetate kinase (396 aa).

Asparagine 8 contacts Mg(2+). Position 15 (lysine 15) interacts with ATP. Arginine 89 is a substrate binding site. The active-site Proton donor/acceptor is aspartate 146. ATP-binding positions include histidine 206–glycine 210, aspartate 280–arginine 282, and glycine 328–asparagine 332. Position 382 (glutamate 382) interacts with Mg(2+).

It belongs to the acetokinase family. Homodimer. Mg(2+) is required as a cofactor. The cofactor is Mn(2+).

It localises to the cytoplasm. It catalyses the reaction acetate + ATP = acetyl phosphate + ADP. It participates in metabolic intermediate biosynthesis; acetyl-CoA biosynthesis; acetyl-CoA from acetate: step 1/2. Catalyzes the formation of acetyl phosphate from acetate and ATP. Can also catalyze the reverse reaction. The sequence is that of Acetate kinase from Clavibacter sepedonicus (Clavibacter michiganensis subsp. sepedonicus).